A 351-amino-acid chain; its full sequence is GDSL esterase/lipase At4g26790 (351 aa).

Positions 1–25 (MQRNRVLAFLLLAAQLLVKIPETCA) are cleaved as a signal peptide. Ser36 (nucleophile) is an active-site residue. Asn118 carries N-linked (GlcNAc...) asparagine glycosylation. Residues Asp326 and His329 contribute to the active site.

Belongs to the 'GDSL' lipolytic enzyme family.

The protein localises to the secreted. This is GDSL esterase/lipase At4g26790 from Arabidopsis thaliana (Mouse-ear cress).